Consider the following 164-residue polypeptide: UPF0225 protein Shewmr7_1921 (164 aa).

It belongs to the UPF0225 family.

The chain is UPF0225 protein Shewmr7_1921 from Shewanella sp. (strain MR-7).